The primary structure comprises 383 residues: Lipid-A-disaccharide synthase (383 aa).

The protein belongs to the LpxB family.

It carries out the reaction 2-N,3-O-bis[(3R)-3-hydroxytetradecanoyl]-alpha-D-glucosaminyl 1-phosphate + UDP-2-N,3-O-bis[(3R)-3-hydroxytetradecanoyl]-alpha-D-glucosamine = lipid A disaccharide (E. coli) + UDP + H(+). It catalyses the reaction a lipid X + a UDP-2-N,3-O-bis[(3R)-3-hydroxyacyl]-alpha-D-glucosamine = a lipid A disaccharide + UDP + H(+). Its pathway is glycolipid biosynthesis; lipid IV(A) biosynthesis; lipid IV(A) from (3R)-3-hydroxytetradecanoyl-[acyl-carrier-protein] and UDP-N-acetyl-alpha-D-glucosamine: step 5/6. Condensation of UDP-2,3-diacylglucosamine and 2,3-diacylglucosamine-1-phosphate to form lipid A disaccharide, a precursor of lipid A, a phosphorylated glycolipid that anchors the lipopolysaccharide to the outer membrane of the cell. The polypeptide is Lipid-A-disaccharide synthase (Pectobacterium carotovorum subsp. carotovorum (strain PC1)).